We begin with the raw amino-acid sequence, 70 residues long: Cytochrome c oxidase subunit 8B, mitochondrial (70 aa).

A mitochondrion-targeting transit peptide spans 1-24 (MPRLPPALRLLQPPLRCWVVPKLH). At 25 to 35 (VSAKPARTPTS) the chain is on the mitochondrial matrix side. A helical membrane pass occupies residues 36-59 (PAEQAVGLSMMFLSFLVPAGWVLS). The Mitochondrial intermembrane portion of the chain corresponds to 60 to 70 (HLESYKKSSTA).

The protein belongs to the cytochrome c oxidase VIII family. Component of the cytochrome c oxidase (complex IV, CIV), a multisubunit enzyme composed of 14 subunits. The complex is composed of a catalytic core of 3 subunits MT-CO1, MT-CO2 and MT-CO3, encoded in the mitochondrial DNA, and 11 supernumerary subunits COX4I, COX5A, COX5B, COX6A, COX6B, COX6C, COX7A, COX7B, COX7C, COX8 and NDUFA4, which are encoded in the nuclear genome. The complex exists as a monomer or a dimer and forms supercomplexes (SCs) in the inner mitochondrial membrane with NADH-ubiquinone oxidoreductase (complex I, CI) and ubiquinol-cytochrome c oxidoreductase (cytochrome b-c1 complex, complex III, CIII), resulting in different assemblies (supercomplex SCI(1)III(2)IV(1) and megacomplex MCI(2)III(2)IV(2)).

The protein localises to the mitochondrion inner membrane. The protein operates within energy metabolism; oxidative phosphorylation. Its function is as follows. Component of the cytochrome c oxidase, the last enzyme in the mitochondrial electron transport chain which drives oxidative phosphorylation. The respiratory chain contains 3 multisubunit complexes succinate dehydrogenase (complex II, CII), ubiquinol-cytochrome c oxidoreductase (cytochrome b-c1 complex, complex III, CIII) and cytochrome c oxidase (complex IV, CIV), that cooperate to transfer electrons derived from NADH and succinate to molecular oxygen, creating an electrochemical gradient over the inner membrane that drives transmembrane transport and the ATP synthase. Cytochrome c oxidase is the component of the respiratory chain that catalyzes the reduction of oxygen to water. Electrons originating from reduced cytochrome c in the intermembrane space (IMS) are transferred via the dinuclear copper A center (CU(A)) of subunit 2 and heme A of subunit 1 to the active site in subunit 1, a binuclear center (BNC) formed by heme A3 and copper B (CU(B)). The BNC reduces molecular oxygen to 2 water molecules using 4 electrons from cytochrome c in the IMS and 4 protons from the mitochondrial matrix. The protein is Cytochrome c oxidase subunit 8B, mitochondrial (COX8B) of Eulemur fulvus fulvus (Brown lemur).